The following is a 200-amino-acid chain: UPF0301 protein BruAb1_0502 (200 aa).

Belongs to the UPF0301 (AlgH) family.

In Brucella abortus biovar 1 (strain 9-941), this protein is UPF0301 protein BruAb1_0502.